Reading from the N-terminus, the 631-residue chain is Phosphomethylpyrimidine synthase (631 aa).

Residues Asn-239, Met-268, Tyr-297, His-333, 353–355 (SRG), 394–397 (DGLR), and Glu-433 contribute to the substrate site. His-437 serves as a coordination point for Zn(2+). Tyr-460 is a binding site for substrate. His-501 contributes to the Zn(2+) binding site. [4Fe-4S] cluster-binding residues include Cys-581, Cys-584, and Cys-589.

This sequence belongs to the ThiC family. Homodimer. Requires [4Fe-4S] cluster as cofactor.

The catalysed reaction is 5-amino-1-(5-phospho-beta-D-ribosyl)imidazole + S-adenosyl-L-methionine = 4-amino-2-methyl-5-(phosphooxymethyl)pyrimidine + CO + 5'-deoxyadenosine + formate + L-methionine + 3 H(+). Its pathway is cofactor biosynthesis; thiamine diphosphate biosynthesis. Catalyzes the synthesis of the hydroxymethylpyrimidine phosphate (HMP-P) moiety of thiamine from aminoimidazole ribotide (AIR) in a radical S-adenosyl-L-methionine (SAM)-dependent reaction. The sequence is that of Phosphomethylpyrimidine synthase from Salmonella paratyphi A (strain AKU_12601).